The chain runs to 714 residues: MDTVSAFKLEVRADKIAVITIDAPGEKMNTLKAEFGNQVRGLIRQVRDDKSVRGVVFISAKTDNFIAGADINMIARCRSAQEAEALARQGQQIMAEIHGLSIPVIAAIHGACLGGGLELALACHGRICSDDEKTRLGLPEVQLGLLPGSGGTQRLPRLIGVSTALDMMLTGRQLRARQALKAGLVDEVVPQAILLQAAVELALKGRPASRDMPVRERVLAGPLGRHLLFHFVGKQTQRKTQGNYPAVKRILQVVENGLAHGCSSGYAEEARAFGELAMTPQSQALRSIFFASTDLKKDRGAEAEPGPLTSIAVLGGGLMGGGIAYVTACKGGLPVRIKDIQPRGINHALKYSWDLLNKQVRQRRLRPSERDRQMAMISGATDYQGFAHRDVVIEAVFEDLALKQRMVSEVEQYCGPQTIFASNTSSLPIGDIAAQARRPGRVIGLHFFSPVEKMPLVEVIPHKGTDPQAIATVVQLAKRQGKTPIVVADKAGFYVNRILAPYINEAMRLLVEGEPVEEIDKALVKFGFPVGPIQLLDEVGIDTGTKIIPVLESAFGERFSSPANIIDAILKDDRKGRKNNRGFYLYETKGRKSKKRPDPAVYPLLGIDRPQSRLSAQQVAERCVMMMLNEAARCFDEQIIRSARDGDIGAVFGIGFPPFLGGPFRYMDTIGAGEVAAILQRLAAQYGPRFTPCDTLLRMAEQGTTFWPADERLT.

Positions 1-190 (MDTVSAFKLE…KAGLVDEVVP (190 aa)) are enoyl-CoA hydratase. The interval 306-714 (GPLTSIAVLG…TFWPADERLT (409 aa)) is 3-hydroxyacyl-CoA dehydrogenase.

The protein in the N-terminal section; belongs to the enoyl-CoA hydratase/isomerase family. It in the central section; belongs to the 3-hydroxyacyl-CoA dehydrogenase family. As to quaternary structure, heterotetramer of two alpha chains (FadJ) and two beta chains (FadI).

Its subcellular location is the cytoplasm. The catalysed reaction is a (3S)-3-hydroxyacyl-CoA = a (2E)-enoyl-CoA + H2O. It carries out the reaction a 4-saturated-(3S)-3-hydroxyacyl-CoA = a (3E)-enoyl-CoA + H2O. It catalyses the reaction a (3S)-3-hydroxyacyl-CoA + NAD(+) = a 3-oxoacyl-CoA + NADH + H(+). The enzyme catalyses (3S)-3-hydroxybutanoyl-CoA = (3R)-3-hydroxybutanoyl-CoA. It participates in lipid metabolism; fatty acid beta-oxidation. Functionally, catalyzes the formation of a hydroxyacyl-CoA by addition of water on enoyl-CoA. Also exhibits 3-hydroxyacyl-CoA epimerase and 3-hydroxyacyl-CoA dehydrogenase activities. The chain is Fatty acid oxidation complex subunit alpha from Klebsiella pneumoniae (strain 342).